The sequence spans 479 residues: GDP-fucose protein O-fucosyltransferase 3 (479 aa).

Residues 1-8 (MVRIQRRK) are Cytoplasmic-facing. Residues 9–31 (LLASCLCVTATVFLLVTLQVMVE) traverse the membrane as a helical; Signal-anchor for type II membrane protein segment. Topologically, residues 32 to 479 (LGKFERKEFK…QEFWGLVFKD (448 aa)) are lumenal. 2 N-linked (GlcNAc...) asparagine glycosylation sites follow: Asn110 and Asn168. A disulfide bond links Cys389 and Cys392.

This sequence belongs to the glycosyltransferase 10 family. In terms of tissue distribution, expressed in lung, digestive tract, gall bladder, placenta, kidney, uterus and brain. Not detected in spleen, heart, muscle, liver and pancreas.

It is found in the endoplasmic reticulum membrane. The protein localises to the golgi apparatus membrane. Its subcellular location is the golgi apparatus. The protein resides in the lysosome. The enzyme catalyses L-threonyl-[protein] + GDP-beta-L-fucose = 3-O-(alpha-L-fucosyl)-L-threonyl-[protein] + GDP + H(+). It carries out the reaction L-seryl-[protein] + GDP-beta-L-fucose = 3-O-(alpha-L-fucosyl)-L-seryl-[protein] + GDP + H(+). The protein operates within protein modification; protein glycosylation. Its function is as follows. Protein O-fucosyltransferase that specifically catalyzes O-fucosylation of serine or threonine residues in EMI domains of target proteins, such as MMRN1, MMRN2 and EMID1. Attaches fucose through an O-glycosidic linkage. O-fucosylation of EMI domain-containing proteins may be required for facilitating protein folding and secretion. May also show alpha-(1,3)-fucosyltransferase activity toward the innermost N-acetyl glucosamine (GlcNAc) residue in biantennary N-glycan acceptors. However, this was tested with a library of synthetic substrates and this activity is unsure in vivo. May be involved in biosynthesis of Lewis X-carrying biantennary N-glycans that regulate neuron stem cell self-renewal during brain development. This chain is GDP-fucose protein O-fucosyltransferase 3, found in Homo sapiens (Human).